The following is a 449-amino-acid chain: Putative recombination initiation defects 3 (449 aa).

Residues 21–56 are disordered; that stretch reads LRRSAEPQASQQLRSQQSQQSFSQGPSSSQRGCGGF. Over residues 28–50 the composition is skewed to low complexity; sequence QASQQLRSQQSQQSFSQGPSSSQ. A Nuclear localization signal motif is present at residues 437 to 441; sequence RTKRK.

Interacts with PRD1; this interaction facilitates a binding to DFO.

The protein resides in the nucleus. In terms of biological role, involved in DNA cleavage that forms the double-strand breaks (DSB) that initiate meiotic recombination. The sequence is that of Putative recombination initiation defects 3 from Arabidopsis thaliana (Mouse-ear cress).